We begin with the raw amino-acid sequence, 331 residues long: Tryptophan--tRNA ligase 1 (331 aa).

ATP is bound by residues Lys9 to Thr11 and Gly17 to Asn18. Positions Pro10 to Asn18 match the 'HIGH' region motif. L-tryptophan is bound at residue Asp137. Residues Gly149 to Asp151, Val188, and Lys197 to Ser201 contribute to the ATP site. Positions Lys197–Ser201 match the 'KMSKS' region motif.

Belongs to the class-I aminoacyl-tRNA synthetase family. In terms of assembly, homodimer.

It localises to the cytoplasm. It catalyses the reaction tRNA(Trp) + L-tryptophan + ATP = L-tryptophyl-tRNA(Trp) + AMP + diphosphate + H(+). Functionally, catalyzes the attachment of tryptophan to tRNA(Trp). This chain is Tryptophan--tRNA ligase 1, found in Streptomyces avermitilis (strain ATCC 31267 / DSM 46492 / JCM 5070 / NBRC 14893 / NCIMB 12804 / NRRL 8165 / MA-4680).